The chain runs to 469 residues: Mitochondrial adenyl nucleotide antiporter SLC25A25 (469 aa).

Residues 1 to 165 are regulatory N-terminal domain; the sequence is MLCLCLYVPI…LYWKHSTIFD (165 aa). The Mitochondrial intermembrane segment spans residues 1–189; it reads MLCLCLYVPI…ERQTGMWWRH (189 aa). EF-hand domains lie at 47–80, 78–113, and 114–149; these read TYRQ…QDHE, DHEK…LGVK, and ISEQ…HPVE. 5 residues coordinate Ca(2+): D60, D62, D64, Q66, and E71. Residues 151-160 are linker region; that stretch reads IPEIILYWKH. Positions 166–469 are C-terminal transmembrane transporter domain; that stretch reads VGENLTVPDE…LKITLGVQSR (304 aa). Solcar repeat units follow at residues 184–270, 278–363, and 375–463; these read GMWW…MKRL, LRIH…LKNT, and PGVF…LKIT. A helical transmembrane segment spans residues 190 to 207; sequence LVAGGGAGAVSRTCTAPL. Topologically, residues 208 to 244 are mitochondrial matrix; the sequence is DRLKVLMQVHASRSNNMCIIGGFTQMIREGGAKSLWR. A helical transmembrane segment spans residues 245–264; the sequence is GNGINVLKIAPESAIKFMAY. Residues 265–287 lie on the Mitochondrial intermembrane side of the membrane; that stretch reads EQMKRLVGSDQETLRIHERLVAG. The chain crosses the membrane as a helical span at residues 288-301; that stretch reads SLAGAIAQSSIYPM. Over 302–337 the chain is Mitochondrial matrix; sequence EVLKTRMALRKTGQYSGMLDCAKRILAKEGVAAFYK. A helical membrane pass occupies residues 338-357; that stretch reads GYIPNMLGIIPYAGIDLAVY. Residues 358–380 lie on the Mitochondrial intermembrane side of the membrane; that stretch reads ETLKNTWLQRYAVNSADPGVFVL. Residues 381–398 traverse the membrane as a helical segment; it reads LACGTISSTCGQLASYPL. The Mitochondrial matrix portion of the chain corresponds to 399 to 437; the sequence is ALVRTRMQAQASIEGAPEVTMSSLFKQILRTEGAFGLYR. The chain crosses the membrane as a helical span at residues 438 to 457; it reads GLAPNFMKVIPAVSISYVVY. Topologically, residues 458 to 469 are mitochondrial intermembrane; that stretch reads ENLKITLGVQSR.

The protein belongs to the mitochondrial carrier (TC 2.A.29) family. As to expression, mainly present in the liver and the skeletal muscle (at protein level).

It localises to the mitochondrion inner membrane. The enzyme catalyses Mg(2+)(out) + phosphate(in) + ATP(out) = Mg(2+)(in) + phosphate(out) + ATP(in). Activated by an increase in cytosolic calcium levels that induce a conformational change of the N-terminal regulatory domain, uncapping the channel and allowing transport. In terms of biological role, electroneutral antiporter that most probably mediates the transport of adenyl nucleotides through the inner mitochondrial membrane. Originally identified as an ATP-magnesium/inorganic phosphate antiporter, it could have a broader specificity for adenyl nucleotides. By regulating the mitochondrial matrix adenyl nucleotide pool could adapt to changing cellular energetic demands and indirectly regulate adenyl nucleotide-dependent metabolic pathways. This is Mitochondrial adenyl nucleotide antiporter SLC25A25 from Rattus norvegicus (Rat).